We begin with the raw amino-acid sequence, 714 residues long: MKITYCDALIIGGGLAGLRASIACKQKGLNTIVLSLVPVRRSHSAAAQGGMQASLANAKKSEGDNEDLHFLDTVKGSDWGCDQQVARMFVTTAPKAIRELASWGVPWTRIKKGDRPAVVNGEHVTITERDDRHGYILSRDFGGTKKWRTCFTADATGHTMLYAVANEALHHKVDIQDRKDMLAFIHHDNKCYGAVVRDLITGEISAYVSKGTLLATGGYGRVYKHTTNAVICDGAGAASALETGVAKLGNMEAVQFHPTALVPSGILMTEGCRGDGGVLRDKFGRRFMPAYEPEKKELASRDVVSRRILEHIQKGYGAKSPYGDHVWLDIAILGRNHVEKNLRDVRDIAMTFAGIDPADSKEQTKDNMQGVPANEPEYGQAMAKQKGWIPIKPMQHYSMGGVRTNPKGETHLKGLFCAGEAACWDLHGFNRLGGNSVSEAVVAGMIIGDYFASHCLEAQIEINTQKVEAFIKESQDYMHFLLHNEGKEDVYEIRERMKEVMDEKVGVFREGKRLEEALKELQELYARSKNICVKNKVLHNNPELEDAYRTKKMLKLALCITQGALLRTESRGAHTRIDYPKRDDEKWLNRTLASWPSAEQDMPTIEYEELDVMKMEISPDFRGYGKKGNFIPHPKKEERDAEILKTILELEKLGKDRIEVQHALMPFELQEKYKARNMRLEDEEVRARGEHLYSFNVHELLDQHNANLKGEHHE.

FAD-binding positions include 13–16, 42–44, and 49–50; these read GGLA, SHS, and GG. Tele-8alpha-FAD histidine is present on H43. Residues H257 and R273 contribute to the active site. Residues E420 and 436-437 each bind FAD; that span reads SV.

This sequence belongs to the FAD-dependent oxidoreductase 2 family. FRD/SDH subfamily. In terms of assembly, part of an enzyme complex containing three subunits: a flavoprotein (frdA), an iron-sulfur protein (frdB), and diheme cytochrome b (frdC). FAD is required as a cofactor.

It localises to the cell inner membrane. The enzyme catalyses a quinone + succinate = fumarate + a quinol. The fumarate reductase enzyme complex is required for fumarate respiration. The sequence is that of Fumarate reductase flavoprotein subunit (frdA) from Helicobacter pylori (strain ATCC 700392 / 26695) (Campylobacter pylori).